The sequence spans 225 residues: uncharacterized protein (225 aa).

This is an uncharacterized protein from Dictyostelium discoideum (Social amoeba).